Reading from the N-terminus, the 295-residue chain is Inositol monophosphatase 1 (295 aa).

Mg(2+)-binding residues include Glu-73, Asp-92, Ile-94, Asp-95, and Asp-231. Substrate is bound at residue Glu-73. Residues 94 to 97 (IDGT) and Asp-231 each bind substrate.

It belongs to the inositol monophosphatase superfamily. Mg(2+) serves as cofactor.

The protein localises to the cytoplasm. It localises to the nucleus. It carries out the reaction a myo-inositol phosphate + H2O = myo-inositol + phosphate. Its pathway is polyol metabolism; myo-inositol biosynthesis; myo-inositol from D-glucose 6-phosphate: step 2/2. Its activity is regulated as follows. Inhibited by Li(+) and Na(+). Responsible for the provision of inositol required for synthesis of phosphatidylinositol and polyphosphoinositides. The polypeptide is Inositol monophosphatase 1 (INM1) (Saccharomyces cerevisiae (strain ATCC 204508 / S288c) (Baker's yeast)).